Here is a 378-residue protein sequence, read N- to C-terminus: S-adenosylmethionine:tRNA ribosyltransferase-isomerase (378 aa).

This sequence belongs to the QueA family. In terms of assembly, monomer.

The protein resides in the cytoplasm. The catalysed reaction is 7-aminomethyl-7-carbaguanosine(34) in tRNA + S-adenosyl-L-methionine = epoxyqueuosine(34) in tRNA + adenine + L-methionine + 2 H(+). Its pathway is tRNA modification; tRNA-queuosine biosynthesis. Its function is as follows. Transfers and isomerizes the ribose moiety from AdoMet to the 7-aminomethyl group of 7-deazaguanine (preQ1-tRNA) to give epoxyqueuosine (oQ-tRNA). This is S-adenosylmethionine:tRNA ribosyltransferase-isomerase from Prochlorococcus marinus (strain MIT 9312).